Here is a 624-residue protein sequence, read N- to C-terminus: DNA mismatch repair protein MutL (624 aa).

The disordered stretch occupies residues glycine 360–tyrosine 396. Positions proline 369 to alanine 385 are enriched in basic and acidic residues.

It belongs to the DNA mismatch repair MutL/HexB family.

In terms of biological role, this protein is involved in the repair of mismatches in DNA. It is required for dam-dependent methyl-directed DNA mismatch repair. May act as a 'molecular matchmaker', a protein that promotes the formation of a stable complex between two or more DNA-binding proteins in an ATP-dependent manner without itself being part of a final effector complex. The sequence is that of DNA mismatch repair protein MutL from Serratia proteamaculans (strain 568).